Here is a 56-residue protein sequence, read N- to C-terminus: uncharacterized protein (56 aa).

Residues 12-32 traverse the membrane as a helical segment; it reads GITLFPYFAILILILAILVVG. The segment at 19–31 is hydrophobic; the sequence is FAILILILAILVV.

The protein localises to the membrane. This is an uncharacterized protein from Chenopodium amaranticolor (Quinoa).